Here is a 144-residue protein sequence, read N- to C-terminus: 3-hydroxyacyl-[acyl-carrier-protein] dehydratase FabZ (144 aa).

The active site involves histidine 48.

This sequence belongs to the thioester dehydratase family. FabZ subfamily.

The protein resides in the cytoplasm. The catalysed reaction is a (3R)-hydroxyacyl-[ACP] = a (2E)-enoyl-[ACP] + H2O. In terms of biological role, involved in unsaturated fatty acids biosynthesis. Catalyzes the dehydration of short chain beta-hydroxyacyl-ACPs and long chain saturated and unsaturated beta-hydroxyacyl-ACPs. The polypeptide is 3-hydroxyacyl-[acyl-carrier-protein] dehydratase FabZ (Bacillus cereus (strain AH187)).